The sequence spans 280 residues: Pantothenate synthetase (280 aa).

31–38 (MGNLHAGH) is a binding site for ATP. Histidine 38 acts as the Proton donor in catalysis. Position 62 (glutamine 62) interacts with (R)-pantoate. Glutamine 62 lines the beta-alanine pocket. 150–153 (GKKD) serves as a coordination point for ATP. Glutamine 156 lines the (R)-pantoate pocket. Residues valine 179 and 187-190 (MSSR) contribute to the ATP site.

This sequence belongs to the pantothenate synthetase family. As to quaternary structure, homodimer.

The protein localises to the cytoplasm. It carries out the reaction (R)-pantoate + beta-alanine + ATP = (R)-pantothenate + AMP + diphosphate + H(+). It participates in cofactor biosynthesis; (R)-pantothenate biosynthesis; (R)-pantothenate from (R)-pantoate and beta-alanine: step 1/1. In terms of biological role, catalyzes the condensation of pantoate with beta-alanine in an ATP-dependent reaction via a pantoyl-adenylate intermediate. The protein is Pantothenate synthetase of Xanthomonas euvesicatoria pv. vesicatoria (strain 85-10) (Xanthomonas campestris pv. vesicatoria).